A 301-amino-acid chain; its full sequence is Ethylmalonyl-CoA decarboxylase (301 aa).

An N6-acetyllysine; alternate modification is found at Lys-211. Lys-211 is modified (N6-succinyllysine; alternate). Lys-295 bears the N6-succinyllysine mark.

Belongs to the enoyl-CoA hydratase/isomerase family.

It localises to the cytoplasm. The protein localises to the cytosol. The catalysed reaction is (2S)-ethylmalonyl-CoA + H(+) = butanoyl-CoA + CO2. The enzyme catalyses (S)-methylmalonyl-CoA + H(+) = propanoyl-CoA + CO2. It catalyses the reaction (2R)-ethylmalonyl-CoA + H(+) = butanoyl-CoA + CO2. Functionally, decarboxylates ethylmalonyl-CoA, a potentially toxic metabolite, to form butyryl-CoA, suggesting it might be involved in metabolite proofreading. Acts preferentially on (S)-ethylmalonyl-CoA but also has some activity on the (R)-isomer. Also has methylmalonyl-CoA decarboxylase activity at lower level. This chain is Ethylmalonyl-CoA decarboxylase (ECHDC1), found in Pongo abelii (Sumatran orangutan).